Here is a 339-residue protein sequence, read N- to C-terminus: tRNA N6-adenosine threonylcarbamoyltransferase (339 aa).

Fe cation is bound by residues histidine 111 and histidine 115. Substrate contacts are provided by residues 139–143, aspartate 172, glycine 185, aspartate 189, and asparagine 280; that span reads LVSGG. Aspartate 308 is a binding site for Fe cation.

The protein belongs to the KAE1 / TsaD family. The cofactor is Fe(2+).

It localises to the cytoplasm. It carries out the reaction L-threonylcarbamoyladenylate + adenosine(37) in tRNA = N(6)-L-threonylcarbamoyladenosine(37) in tRNA + AMP + H(+). In terms of biological role, required for the formation of a threonylcarbamoyl group on adenosine at position 37 (t(6)A37) in tRNAs that read codons beginning with adenine. Is involved in the transfer of the threonylcarbamoyl moiety of threonylcarbamoyl-AMP (TC-AMP) to the N6 group of A37, together with TsaE and TsaB. TsaD likely plays a direct catalytic role in this reaction. In Phocaeicola vulgatus (strain ATCC 8482 / DSM 1447 / JCM 5826 / CCUG 4940 / NBRC 14291 / NCTC 11154) (Bacteroides vulgatus), this protein is tRNA N6-adenosine threonylcarbamoyltransferase.